The following is a 621-amino-acid chain: Kelch-like protein 40 (621 aa).

In terms of domain architecture, BTB spans 33–98 (LDCVVRVGER…LYTSEIALDE (66 aa)). Residues 133–239 (CLAVFRLGLL…PRAFLETRVE (107 aa)) form the BACK domain. A disordered region spans residues 265 to 298 (LTTLRKKKKEKGEQTARAKEANQGTEDTKAEDDE). Over residues 274–284 (EKGEQTARAKE) the composition is skewed to basic and acidic residues. 5 Kelch repeats span residues 360–412 (QVFV…EALN), 413–462 (AIYV…SHMD), 463–510 (LVYV…VHDG), 512–557 (IFVA…SLAG), and 559–613 (LYAL…PVRL).

This sequence belongs to the KLHL40 family. Component of the BCR(KLHL40) E3 ubiquitin ligase complex, at least composed of CUL3, KLHL40 and RBX1. Interacts with LMOD3. Specifically expressed in skeletal muscles in embryonic, neonatal and adults. Expressed in various types of muscles, including extensor digitorum longus, gastrocnemius, soleus, diaphragm, masseter and heart (at protein level). Not detected in brain, liver and lung (at protein level).

Its subcellular location is the cytoplasm. The protein localises to the myofibril. It is found in the sarcomere. The protein resides in the a band. It localises to the i band. Its function is as follows. Substrate-specific adapter of a BCR (BTB-CUL3-RBX1) E3 ubiquitin ligase complex that acts as a key regulator of skeletal muscle development. The BCR(KLHL40) complex acts by mediating ubiquitination and degradation of TFDP1, thereby regulating the activity of the E2F:DP transcription factor complex. Promotes stabilization of LMOD3 by acting as a negative regulator of LMOD3 ubiquitination; the molecular process by which it negatively regulates ubiquitination of LMOD3 is however unclear. This is Kelch-like protein 40 from Mus musculus (Mouse).